The chain runs to 664 residues: Peroxisomal acyl-coenzyme A oxidase 1 (664 aa).

Residues tyrosine 135, glutamine 137, threonine 138, serine 144, glycine 177, arginine 310, glutamine 330, arginine 333, glycine 401, and threonine 422 each coordinate FAD. Residue glutamate 424 is the Proton acceptor of the active site. Aspartate 426 is an FAD binding site. Cysteine 467 and cysteine 576 are oxidised to a cystine. The short motif at 662 to 664 (ARL) is the Microbody targeting signal element.

It belongs to the acyl-CoA oxidase family. In terms of assembly, homodimer. Requires FAD as cofactor. Expressed mainly in flowers and young seedlings. Lower expression in roots, leaves and bracts.

Its subcellular location is the peroxisome. It catalyses the reaction a 2,3-saturated acyl-CoA + O2 = a (2E)-enoyl-CoA + H2O2. Its function is as follows. Catalyzes the desaturation of both long- and medium-chain acyl-CoAs to 2-trans-enoyl-CoAs. Most active with C14-CoA. Activity on long-chain mono-unsaturated substrates is 40% higher than with the corresponding saturated substrates. Seems to be an important factor in the general metabolism of root tips. May be involved in the biosynthesis of jasmonic acid. The protein is Peroxisomal acyl-coenzyme A oxidase 1 of Arabidopsis thaliana (Mouse-ear cress).